A 42-amino-acid polypeptide reads, in one-letter code: Lanthionine-containing peptide SapB precursor RamS (42 aa).

The propeptide occupies 1-21 (MNLFDLQSMETPKEEAMGDVE). Residues 1 to 21 (MNLFDLQSMETPKEEAMGDVE) are disordered. 2 cross-links (lanthionine (Ser-Cys)) span residues 24 to 31 (SRASLLLC) and 34 to 41 (SSLSITTC). 2,3-didehydroalanine (Ser) occurs at positions 27 and 37.

The protein belongs to the lanthionine-containing morphogen family. Maturation involves the enzymatic conversion of Ser into dehydrated AA and the formation of thioether bonds with cysteine, probably by RamC. This is followed by membrane translocation and cleavage of the modified precursor. The RamS precursor protein (detected by an anti-propeptide antibody and by a C-terminal His-tag) is detected from at least 16 hours post-germination; its apparent molecular weight decreases starting from about 34 hours, when its probable modifying enzyme ramC is transcribed. Surfactin, a B.subtilis cyclic lipopeptide antibiotic which prevents aerial hyphae formation in S.coelicolor, decreases localization of RamS precursor protein to the cell membrane, suggesting that processing only occurs at the cell membrane.

Its subcellular location is the cell membrane. It is found in the secreted. The protein resides in the spore wall. Functionally, stably accumulated precursor of SapB. In terms of biological role, lanthionine-containing peptide devoid of antibiotic properties. A surface active peptide involved in the efficient formation of aerial mycelium when cells are grown in rich media. Has an overlapping function with the surface-active chaplin proteins; chaplins are essential on minimal medium while on rich medium both chaplins and SapB are required for efficient aerial hyphae formation. Required under conditions of high osmolarity where it may change the physical properties of the chaplin layer to allow hyphae to grow into air. Suggested to self-assemble at air-water interfaces, thus providing a film of surfactant through which nascent aerial hyphae can emerge; the aerial hyphae differentiate further into spores. Application to bald mutants (bld, unable to make aerial hyphae) restores hyphae growth. Application to chaplin negative mutants as well as ramC-ramS-ramA-ramB and ramR deletions also restores aerial hyphae growth and sporulation. Reduces surface tension of water from 72 to 30 mJ/m(2). The sequence is that of Lanthionine-containing peptide SapB precursor RamS (ramS) from Streptomyces coelicolor (strain ATCC BAA-471 / A3(2) / M145).